A 692-amino-acid polypeptide reads, in one-letter code: Elongation factor G (692 aa).

The region spanning 9 to 284 (EKIRNIGIMA…AVVDYLPSPV (276 aa)) is the tr-type G domain. GTP is bound by residues 18–25 (AHIDAGKT), 82–86 (DTPGH), and 136–139 (NKMD).

Belongs to the TRAFAC class translation factor GTPase superfamily. Classic translation factor GTPase family. EF-G/EF-2 subfamily.

The protein localises to the cytoplasm. In terms of biological role, catalyzes the GTP-dependent ribosomal translocation step during translation elongation. During this step, the ribosome changes from the pre-translocational (PRE) to the post-translocational (POST) state as the newly formed A-site-bound peptidyl-tRNA and P-site-bound deacylated tRNA move to the P and E sites, respectively. Catalyzes the coordinated movement of the two tRNA molecules, the mRNA and conformational changes in the ribosome. The polypeptide is Elongation factor G (Neorickettsia sennetsu (strain ATCC VR-367 / Miyayama) (Ehrlichia sennetsu)).